The primary structure comprises 441 residues: Ribosomal protein uS12 methylthiotransferase RimO (441 aa).

Residues 6 to 116 (QKVGIVSLGC…VVAAVHEAAP (111 aa)) form the MTTase N-terminal domain. C15, C51, C80, C147, C151, and C154 together coordinate [4Fe-4S] cluster. The 238-residue stretch at 133-370 (LTPRHYAYLK…MAAQQEISER (238 aa)) folds into the Radical SAM core domain. In terms of domain architecture, TRAM spans 373–439 (AQKVGTVIEA…EYDLWGSLAG (67 aa)).

Belongs to the methylthiotransferase family. RimO subfamily. [4Fe-4S] cluster serves as cofactor.

The protein localises to the cytoplasm. It catalyses the reaction L-aspartate(89)-[ribosomal protein uS12]-hydrogen + (sulfur carrier)-SH + AH2 + 2 S-adenosyl-L-methionine = 3-methylsulfanyl-L-aspartate(89)-[ribosomal protein uS12]-hydrogen + (sulfur carrier)-H + 5'-deoxyadenosine + L-methionine + A + S-adenosyl-L-homocysteine + 2 H(+). Catalyzes the methylthiolation of an aspartic acid residue of ribosomal protein uS12. The chain is Ribosomal protein uS12 methylthiotransferase RimO from Rhodospirillum rubrum (strain ATCC 11170 / ATH 1.1.1 / DSM 467 / LMG 4362 / NCIMB 8255 / S1).